Here is a 130-residue protein sequence, read N- to C-terminus: Small ribosomal subunit protein uS8 (130 aa).

This sequence belongs to the universal ribosomal protein uS8 family. In terms of assembly, part of the 30S ribosomal subunit. Contacts proteins S5 and S12.

One of the primary rRNA binding proteins, it binds directly to 16S rRNA central domain where it helps coordinate assembly of the platform of the 30S subunit. The polypeptide is Small ribosomal subunit protein uS8 (Nitrosococcus oceani (strain ATCC 19707 / BCRC 17464 / JCM 30415 / NCIMB 11848 / C-107)).